The primary structure comprises 339 residues: Heat-inducible transcription repressor HrcA (339 aa).

Belongs to the HrcA family.

Negative regulator of class I heat shock genes (grpE-dnaK-dnaJ and groELS operons). Prevents heat-shock induction of these operons. This chain is Heat-inducible transcription repressor HrcA, found in Nitrosospira multiformis (strain ATCC 25196 / NCIMB 11849 / C 71).